We begin with the raw amino-acid sequence, 230 residues long: Ureidoacrylate amidohydrolase RutB (230 aa).

The active-site Proton acceptor is Asp24. Lys133 is a catalytic residue. Cys166 serves as the catalytic Nucleophile.

The protein belongs to the isochorismatase family. RutB subfamily.

The catalysed reaction is (Z)-3-ureidoacrylate + H2O + H(+) = (Z)-3-aminoacrylate + NH4(+) + CO2. The enzyme catalyses (Z)-3-ureidoacrylate + H2O = (Z)-3-aminoacrylate + carbamate + H(+). It carries out the reaction (Z)-2-methylureidoacrylate + H2O + H(+) = (Z)-2-methylaminoacrylate + NH4(+) + CO2. In terms of biological role, hydrolyzes ureidoacrylate to form aminoacrylate and carbamate. The carbamate hydrolyzes spontaneously, thereby releasing one of the nitrogen atoms of the pyrimidine ring as ammonia and one of its carbon atoms as CO2. This is Ureidoacrylate amidohydrolase RutB from Escherichia coli O103:H2 (strain 12009 / EHEC).